A 363-amino-acid polypeptide reads, in one-letter code: Phospho-N-acetylmuramoyl-pentapeptide-transferase (363 aa).

11 helical membrane passes run 4 to 24, 28 to 48, 72 to 92, 96 to 116, 129 to 149, 169 to 189, 200 to 220, 241 to 261, 266 to 286, 294 to 314, and 342 to 362; these read NLLVSHINSCYIFSIFYNVIV, IAILLSFSISFSLIPILIKYF, TPTMGGIAIIFSIIISTLMLA, NIYVLTTIFGMLSLAILGLID, INATCKLISQIMVSIICCMIV, LTIDLSIFYIPFALFIIIGSS, GLVTVPIIIVSFCLGLMCYLA, ELTVLCSAIIGASLGFLWYNI, IFMGDVGSLSLGGAIGIISVI, GIIGGLFVIEALSAIIQIYSI, and IVSRFWLLSIIFSLIGLSSLI.

The protein belongs to the glycosyltransferase 4 family. MraY subfamily. Mg(2+) serves as cofactor.

The protein localises to the cell inner membrane. It carries out the reaction UDP-N-acetyl-alpha-D-muramoyl-L-alanyl-gamma-D-glutamyl-meso-2,6-diaminopimeloyl-D-alanyl-D-alanine + di-trans,octa-cis-undecaprenyl phosphate = di-trans,octa-cis-undecaprenyl diphospho-N-acetyl-alpha-D-muramoyl-L-alanyl-D-glutamyl-meso-2,6-diaminopimeloyl-D-alanyl-D-alanine + UMP. It participates in cell wall biogenesis; peptidoglycan biosynthesis. Its function is as follows. Catalyzes the initial step of the lipid cycle reactions in the biosynthesis of the cell wall peptidoglycan: transfers peptidoglycan precursor phospho-MurNAc-pentapeptide from UDP-MurNAc-pentapeptide onto the lipid carrier undecaprenyl phosphate, yielding undecaprenyl-pyrophosphoryl-MurNAc-pentapeptide, known as lipid I. This is Phospho-N-acetylmuramoyl-pentapeptide-transferase from Orientia tsutsugamushi (strain Ikeda) (Rickettsia tsutsugamushi).